We begin with the raw amino-acid sequence, 393 residues long: PPE family protein PPE26 (393 aa).

It belongs to the mycobacterial PPE family. As to quaternary structure, interacts with human TLR2.

Probably plays a key role in regulating innate and adaptive immune responses through human Toll-like receptor 2 (TLR2). Interacts with TLR2, leading to the subsequent activation of the mitogen-activated protein kinase (MAPK) and nuclear factor kappa B (NF-kappa-B) signaling pathways. Stimulates macrophage activation by augmenting pro-inflammatory cytokine production (TNF-alpha, IL-6 and IL-12p40) and the expression of cell surface molecules (CD80, CD86, MHC class I and II). Also participates in adaptive immunity by directing Th1-polarised immune responses. This chain is PPE family protein PPE26, found in Mycobacterium tuberculosis (strain ATCC 25618 / H37Rv).